Reading from the N-terminus, the 869-residue chain is Probable beta-glucosidase F (869 aa).

The N-terminal stretch at 1–19 (MRVLSAIALVASLVPSALS) is a signal peptide. Residues asparagine 69, asparagine 77, and asparagine 261 are each glycosylated (N-linked (GlcNAc...) asparagine). Aspartate 289 is an active-site residue. Asparagine 332, asparagine 364, asparagine 399, asparagine 425, and asparagine 478 each carry an N-linked (GlcNAc...) asparagine glycan. The disordered stretch occupies residues 678–698 (AYPPTRPPKGPTPTYPTTIPN). Residues 681–691 (PTRPPKGPTPT) are compositionally biased toward pro residues. Asparagine 728 carries N-linked (GlcNAc...) asparagine glycosylation.

It belongs to the glycosyl hydrolase 3 family.

The protein resides in the secreted. The enzyme catalyses Hydrolysis of terminal, non-reducing beta-D-glucosyl residues with release of beta-D-glucose.. It participates in glycan metabolism; cellulose degradation. In terms of biological role, beta-glucosidases are one of a number of cellulolytic enzymes involved in the degradation of cellulosic biomass. Catalyzes the last step releasing glucose from the inhibitory cellobiose. The protein is Probable beta-glucosidase F (bglF) of Neosartorya fischeri (strain ATCC 1020 / DSM 3700 / CBS 544.65 / FGSC A1164 / JCM 1740 / NRRL 181 / WB 181) (Aspergillus fischerianus).